We begin with the raw amino-acid sequence, 563 residues long: Bifunctional dihydrofolate reductase-thymidylate synthase (563 aa).

In terms of domain architecture, DHFR spans 3 to 195 (KFNIIAAINN…ILLRFQEYSV (193 aa)). Residue 117–124 (GGGVIYDL) participates in NADP(+) binding. The segment at 275-563 (YIELVKTIME…CPSISAEMIA (289 aa)) is thymidylate synthase. Arg-292 is a binding site for dUMP. Residue Cys-435 is part of the active site. Residues His-436, 464-468 (QRSWD), Asn-474, and 504-506 (HIY) contribute to the dUMP site.

It in the N-terminal section; belongs to the dihydrofolate reductase family. The protein in the C-terminal section; belongs to the thymidylate synthase family.

It catalyses the reaction (6S)-5,6,7,8-tetrahydrofolate + NADP(+) = 7,8-dihydrofolate + NADPH + H(+). It carries out the reaction dUMP + (6R)-5,10-methylene-5,6,7,8-tetrahydrofolate = 7,8-dihydrofolate + dTMP. Its pathway is cofactor biosynthesis; tetrahydrofolate biosynthesis; 5,6,7,8-tetrahydrofolate from 7,8-dihydrofolate: step 1/1. Its function is as follows. Bifunctional enzyme. Involved in de novo dTMP biosynthesis. Key enzyme in folate metabolism. Catalyzes an essential reaction for de novo glycine and purine synthesis, DNA precursor synthesis, and for the conversion of dUMP to dTMP. The chain is Bifunctional dihydrofolate reductase-thymidylate synthase from Acanthamoeba polyphaga mimivirus (APMV).